A 360-amino-acid polypeptide reads, in one-letter code: Alanine racemase (360 aa).

Residue Lys36 is the Proton acceptor; specific for D-alanine of the active site. Lys36 carries the N6-(pyridoxal phosphate)lysine modification. A substrate-binding site is contributed by Arg132. Catalysis depends on Tyr256, which acts as the Proton acceptor; specific for L-alanine. Met304 contributes to the substrate binding site.

The protein belongs to the alanine racemase family. Pyridoxal 5'-phosphate is required as a cofactor.

The enzyme catalyses L-alanine = D-alanine. Its pathway is amino-acid biosynthesis; D-alanine biosynthesis; D-alanine from L-alanine: step 1/1. Its function is as follows. Catalyzes the interconversion of L-alanine and D-alanine. May also act on other amino acids. This Pasteurella multocida (strain Pm70) protein is Alanine racemase (alr).